The following is a 551-amino-acid chain: Glucans biosynthesis protein D (551 aa).

The segment at residues 1–32 (MNRRRFIKGSMAMAAVCGSSGIASLFSQAAFA) is a signal peptide (tat-type signal).

Belongs to the OpgD/OpgG family. Post-translationally, predicted to be exported by the Tat system. The position of the signal peptide cleavage has not been experimentally proven.

It localises to the periplasm. It participates in glycan metabolism; osmoregulated periplasmic glucan (OPG) biosynthesis. Probably involved in the control of the structural glucose backbone of osmoregulated periplasmic glucans (OPGs). This is Glucans biosynthesis protein D (mdoD) from Salmonella typhimurium (strain LT2 / SGSC1412 / ATCC 700720).